The chain runs to 509 residues: Coiled-coil domain-containing protein 181 (509 aa).

Disordered regions lie at residues 1–122 and 237–369; these read MDED…EDEE and FLPP…EKKK. Composition is skewed to basic and acidic residues over residues 22–33 and 41–56; these read DLEWLINDKEKS and ACKK…KENE. A compositionally biased stretch (polar residues) spans 60–69; it reads ELGQQLSDPD. Basic and acidic residues-rich tracts occupy residues 70 to 82 and 266 to 275; these read NSPK…RRND and IKKEESEAKG. A compositionally biased stretch (polar residues) spans 319–333; it reads RIQSAGVSPVTSTYC. 2 coiled-coil regions span residues 335–377 and 418–488; these read SPRQ…VFKA and LKKK…RSKQ. Positions 337–369 are enriched in basic and acidic residues; that stretch reads RQKELQKQLERKREKLKREEEQRKLEEENEKKK.

It belongs to the CCDC181 family. As to quaternary structure, homodimer. Interacts with HOOK1. Interacts with HOOK2. Interacts with HOOK3. Predominantly expressed in testis. Expressed at lower level in brain, eye, trachea and lung. Barely expressed in tongue, heart, liver, kidney, spleen and muscle. Present at high level in elongating spermatids, whereas lower levels are observed in round spermatids (at protein level).

It is found in the cytoplasm. Its subcellular location is the cytoskeleton. It localises to the cell projection. The protein resides in the cilium. The protein localises to the flagellum. Its function is as follows. Microtubule-binding protein that localizes to the microtubular manchette of elongating spermatids. In Mus musculus (Mouse), this protein is Coiled-coil domain-containing protein 181.